We begin with the raw amino-acid sequence, 408 residues long: Imidazolonepropionase (408 aa).

2 residues coordinate Fe(3+): H73 and H75. 2 residues coordinate Zn(2+): H73 and H75. Positions 82, 145, and 178 each coordinate 4-imidazolone-5-propanoate. Y145 contributes to the N-formimidoyl-L-glutamate binding site. Residue H243 participates in Fe(3+) binding. H243 lines the Zn(2+) pocket. Q246 serves as a coordination point for 4-imidazolone-5-propanoate. D318 is a Fe(3+) binding site. D318 contributes to the Zn(2+) binding site. N320 and G322 together coordinate N-formimidoyl-L-glutamate. S323 is a 4-imidazolone-5-propanoate binding site.

The protein belongs to the metallo-dependent hydrolases superfamily. HutI family. Zn(2+) is required as a cofactor. The cofactor is Fe(3+).

The protein resides in the cytoplasm. It catalyses the reaction 4-imidazolone-5-propanoate + H2O = N-formimidoyl-L-glutamate. It functions in the pathway amino-acid degradation; L-histidine degradation into L-glutamate; N-formimidoyl-L-glutamate from L-histidine: step 3/3. Its function is as follows. Catalyzes the hydrolytic cleavage of the carbon-nitrogen bond in imidazolone-5-propanoate to yield N-formimidoyl-L-glutamate. It is the third step in the universal histidine degradation pathway. The sequence is that of Imidazolonepropionase from Shewanella baltica (strain OS155 / ATCC BAA-1091).